We begin with the raw amino-acid sequence, 491 residues long: UDP-N-acetylmuramate--L-alanine ligase (491 aa).

Residue 126–132 (GTHGKTT) coordinates ATP.

Belongs to the MurCDEF family.

The protein localises to the cytoplasm. The catalysed reaction is UDP-N-acetyl-alpha-D-muramate + L-alanine + ATP = UDP-N-acetyl-alpha-D-muramoyl-L-alanine + ADP + phosphate + H(+). Its pathway is cell wall biogenesis; peptidoglycan biosynthesis. Its function is as follows. Cell wall formation. The chain is UDP-N-acetylmuramate--L-alanine ligase from Escherichia coli (strain SE11).